The chain runs to 426 residues: Bifunctional protein GlmU (426 aa).

The tract at residues 1–216 (MSEVDVVILA…WHDILGVNTQ (216 aa)) is pyrophosphorylase. Residues 9–12 (LAAG), K23, and Q69 contribute to the UDP-N-acetyl-alpha-D-glucosamine site. D97 contacts Mg(2+). Residues G132, E148, N163, and N214 each coordinate UDP-N-acetyl-alpha-D-glucosamine. N214 provides a ligand contact to Mg(2+). The interval 217 to 237 (QQLAAVSKIARKRINDQIMAN) is linker. The N-acetyltransferase stretch occupies residues 238–426 (GVTMIDPLTT…AKHDQRDDQP (189 aa)). Residues R286 and K304 each coordinate UDP-N-acetyl-alpha-D-glucosamine. Catalysis depends on H316, which acts as the Proton acceptor. Positions 319 and 330 each coordinate UDP-N-acetyl-alpha-D-glucosamine. Residues A333, 339–340 (NY), S358, A376, and R393 each bind acetyl-CoA.

In the N-terminal section; belongs to the N-acetylglucosamine-1-phosphate uridyltransferase family. The protein in the C-terminal section; belongs to the transferase hexapeptide repeat family. As to quaternary structure, homotrimer. The cofactor is Mg(2+).

The protein resides in the cytoplasm. It carries out the reaction alpha-D-glucosamine 1-phosphate + acetyl-CoA = N-acetyl-alpha-D-glucosamine 1-phosphate + CoA + H(+). The enzyme catalyses N-acetyl-alpha-D-glucosamine 1-phosphate + UTP + H(+) = UDP-N-acetyl-alpha-D-glucosamine + diphosphate. It functions in the pathway nucleotide-sugar biosynthesis; UDP-N-acetyl-alpha-D-glucosamine biosynthesis; N-acetyl-alpha-D-glucosamine 1-phosphate from alpha-D-glucosamine 6-phosphate (route II): step 2/2. The protein operates within nucleotide-sugar biosynthesis; UDP-N-acetyl-alpha-D-glucosamine biosynthesis; UDP-N-acetyl-alpha-D-glucosamine from N-acetyl-alpha-D-glucosamine 1-phosphate: step 1/1. It participates in bacterial outer membrane biogenesis; LPS lipid A biosynthesis. Catalyzes the last two sequential reactions in the de novo biosynthetic pathway for UDP-N-acetylglucosamine (UDP-GlcNAc). The C-terminal domain catalyzes the transfer of acetyl group from acetyl coenzyme A to glucosamine-1-phosphate (GlcN-1-P) to produce N-acetylglucosamine-1-phosphate (GlcNAc-1-P), which is converted into UDP-GlcNAc by the transfer of uridine 5-monophosphate (from uridine 5-triphosphate), a reaction catalyzed by the N-terminal domain. The chain is Bifunctional protein GlmU from Oenococcus oeni (strain ATCC BAA-331 / PSU-1).